The following is a 263-amino-acid chain: MPYITKISAQKNNEERVNIFLDEKYAFSVDLDVLVKFDLRKGKELDELDIIEIQYGDDVKKGFKKALDYLSYRMRSTKEVQDHLKKKGVADSAITEILHMLKGYKYLDDREFAAAYVSTHRKTSGKGPDVLFRELKLKGIDDELIHEALSSFSFSDQVEAAVKHAEKVLKKEKKLSSKETKQAIEQHLVRKGFSFDVISAALQETDYENDDGAEREALEKQGEKAMKRYGYDGSYETKMKVKQYLFRKGFSIDLIDQFLDEKG.

This sequence belongs to the RecX family.

It localises to the cytoplasm. Its function is as follows. Modulates RecA activity. This Bacillus licheniformis (strain ATCC 14580 / DSM 13 / JCM 2505 / CCUG 7422 / NBRC 12200 / NCIMB 9375 / NCTC 10341 / NRRL NRS-1264 / Gibson 46) protein is Regulatory protein RecX.